The following is a 98-amino-acid chain: Integration host factor subunit alpha (98 aa).

The interval 50–71 (GNFDLRDKNQRPGRNPKTGEDI) is disordered.

This sequence belongs to the bacterial histone-like protein family. In terms of assembly, heterodimer of an alpha and a beta chain.

Functionally, this protein is one of the two subunits of integration host factor, a specific DNA-binding protein that functions in genetic recombination as well as in transcriptional and translational control. This Proteus mirabilis (strain HI4320) protein is Integration host factor subunit alpha.